A 129-amino-acid polypeptide reads, in one-letter code: Transcription antitermination protein NusB (129 aa).

The protein belongs to the NusB family.

Its function is as follows. Involved in transcription antitermination. Required for transcription of ribosomal RNA (rRNA) genes. Binds specifically to the boxA antiterminator sequence of the ribosomal RNA (rrn) operons. The protein is Transcription antitermination protein NusB of Bacillus licheniformis (strain ATCC 14580 / DSM 13 / JCM 2505 / CCUG 7422 / NBRC 12200 / NCIMB 9375 / NCTC 10341 / NRRL NRS-1264 / Gibson 46).